Here is a 492-residue protein sequence, read N- to C-terminus: MDPSKYRPSSAYDTPFLTTNAGGPVYNNVSSLTVGPRGPVLLEDYYLIEKLATFDREKIPERVVHARGASAKGFFEVTHDISHLTCADFLRAPGAQTPVICRFSTVVHERGSPESIRDIRGFGVKFYNRGGNFDLVGNNVPVFFNRDAKSFPDTIRALKPNPKSHIQEDWRTLDFFSFLPESLHTFAFFYDDVCLPTDYRHMEGFGVHAYQLINKEGKAHYVKFHWKPTCGVKCMSEEEAIRVGGTNHSHATKDLYDSIAAGNYPEWKLFIQTMDPEDVDKFDFDPLDVTKTWPEDLLPLIPVGRLVLNRNIDNFFAENEQLAFNPGHIVPGIYYSEDKLLQTRIFAYADTQRHRIGPNYMQLPVNAPKCGHHNNHRDGAMNMTHRDEEVDYFPSRFDPCRPAEQYPIPACVLNGRRTNCVIPKENNSKQAGERYRSWESDRQDRYINKWVESLSDPRVTHEIRSIWISYLSQADKSCGQKVASRLTVKPTM.

Catalysis depends on residues H65 and N138. Y348 contacts heme.

This sequence belongs to the catalase family. In terms of assembly, homotetramer. The cofactor is heme.

The protein resides in the peroxisome. It is found in the glyoxysome. The catalysed reaction is 2 H2O2 = O2 + 2 H2O. Its function is as follows. Occurs in almost all aerobically respiring organisms and serves to protect cells from the toxic effects of hydrogen peroxide. This Solanum tuberosum (Potato) protein is Catalase isozyme 1 (CAT1).